A 349-amino-acid chain; its full sequence is MLHLTPLIFLSLAMAAAVGVWGVFTWNGGFDEMDGIVASHQSTGILGLQHCPDLDRGLMSMVAFNLPVVGRNPIFPAGRRFMVQFLANVAVIPVILNTEGARAEPGSLVRYSTTWGLFSQMATSAVMCPLYGFWFVRQSGAKQTEGGTLRPLPPNKWVVPSSVLIGYGIPALLSFDPFQWGLDLQIRGILAFTLYPLCISLTARLMRKVSKKRGRSLSPEWNSTISYVAVGVVGMVSHLWYLGTGLTGYPLSGDAVSSVAGPTEVGRAAQLVLLFLQIDYVITFAAMLLLAWHELTRHQLVRSWRAAGTLAVGWLFLGPGATLAAAWALREQWLSRPRGVRGEIKQKPK.

Transmembrane regions (helical) follow at residues Leu-4 to Phe-24, Phe-81 to Ala-101, Gly-116 to Val-136, Val-158 to Phe-178, and Gly-181 to Leu-201. A glycan (N-linked (GlcNAc...) asparagine) is linked at Asn-222. Helical transmembrane passes span Val-228–Gly-248, Leu-271–Ala-291, and Thr-309–Leu-329.

The protein belongs to the membrane-bound ascI terpene cyclase family.

Its subcellular location is the membrane. It functions in the pathway antifungal biosynthesis. Functionally, cyclase; part of the gene cluster that mediates the biosynthesis of the tetrahydropyranyl antifungal agent restricticin that acts as an inhibitor of CYP51 and blocks the ergosterol biosynthesis. The highly reducing polyketide synthase rstn3, the short chain dehydrogenase rstn4, the cyclase rstn5, the FAD-dependent monooxygenase rstn6 and the enoylreductase rstn7 are required to generate the first stable intermediate desmethylrestrictinol. Rstn3 with rstn7 biosynthesize the first polyketide chain intermediate that is reduced by rstn4, followed by epoxidation by rstn6 before 6-endo cyclization via epoxide opening by rstn5 leads to desmethylrestrictinol. The methyltransferase rstn1 then catalyzes the C4 O-methylation of desmethylrestrictinol to produce restrictinol, and the nonribosomal peptide synthetase rstn8 catalyzes the C3 esterification of restrictinol with glycine that leads to restricticin. The sequence is that of Terpene cyclase rstn5 from Aspergillus nomiae NRRL (strain ATCC 15546 / NRRL 13137 / CBS 260.88 / M93).